A 316-amino-acid polypeptide reads, in one-letter code: MSVFTPLERSTLEAFLAPYDLGRLRDFRGIAEGSENSNFFVSLEHGEFVLTLVERGPVQDLPFFIELLDVLHEDGLPVPYALRTRDGEALRRLEGKPALLQPRLAGRHERQPNAHHCQEVGDLLGHLHAATRGRILERPSDRGLPWMLEQGANLAPRLPEQARALLAPALAEIAALDAERPALPRANLHADLFRDNVLFDGPHLAGLIDFYNACSGWMLYDLAITLNDWCSNTDGSLDPARARALLAAYANRRPFTALEAEHWPSMLRVACVRFWLSRLIAAEAFAGQDVLIHDPAEFEMRLAQRQNVEIHLPFAL.

It belongs to the pseudomonas-type ThrB family.

It catalyses the reaction L-homoserine + ATP = O-phospho-L-homoserine + ADP + H(+). It functions in the pathway amino-acid biosynthesis; L-threonine biosynthesis; L-threonine from L-aspartate: step 4/5. The chain is Homoserine kinase from Pseudomonas aeruginosa (strain LESB58).